A 189-amino-acid polypeptide reads, in one-letter code: Protein Flattop (189 aa).

Residues 112-189 form a disordered region; that stretch reads EISGKPFDPD…PPPSPCKSTK (78 aa). Residues 137–148 are compositionally biased toward polar residues; the sequence is APNPTIIPSSPV. A compositionally biased stretch (pro residues) spans 178–189; that stretch reads NNPPPSPCKSTK.

It belongs to the Flattop family. Microtubule inner protein component of sperm flagellar doublet microtubules. Interacts with DLG3. As to expression, expressed in mono- and multiciliated tissues during planar cell polarity acquisition.

Its subcellular location is the cytoplasm. The protein localises to the cytoskeleton. The protein resides in the cilium basal body. It localises to the cilium axoneme. It is found in the flagellum axoneme. Its subcellular location is the apical cell membrane. Its function is as follows. Microtubule inner protein (MIP) part of the dynein-decorated doublet microtubules (DMTs) in cilia axoneme. Acts as a regulator of cilium basal body docking and positioning in mono- and multiciliated cells. Regulates basal body docking and cilia formation in multiciliated lung cells. Regulates kinocilium positioning and stereocilia bundle morphogenesis in the inner ear. In Mus musculus (Mouse), this protein is Protein Flattop.